Here is a 78-residue protein sequence, read N- to C-terminus: Small ribosomal subunit protein bS18 (78 aa).

It belongs to the bacterial ribosomal protein bS18 family. In terms of assembly, part of the 30S ribosomal subunit. Forms a tight heterodimer with protein bS6.

Functionally, binds as a heterodimer with protein bS6 to the central domain of the 16S rRNA, where it helps stabilize the platform of the 30S subunit. The sequence is that of Small ribosomal subunit protein bS18 from Pediococcus pentosaceus (strain ATCC 25745 / CCUG 21536 / LMG 10740 / 183-1w).